The chain runs to 72 residues: DNA-directed RNA polymerase subunit omega (72 aa).

It belongs to the RNA polymerase subunit omega family. In terms of assembly, the RNAP catalytic core consists of 2 alpha, 1 beta, 1 beta' and 1 omega subunit. When a sigma factor is associated with the core the holoenzyme is formed, which can initiate transcription.

It carries out the reaction RNA(n) + a ribonucleoside 5'-triphosphate = RNA(n+1) + diphosphate. Its function is as follows. Promotes RNA polymerase assembly. Latches the N- and C-terminal regions of the beta' subunit thereby facilitating its interaction with the beta and alpha subunits. The polypeptide is DNA-directed RNA polymerase subunit omega (Clostridium acetobutylicum (strain ATCC 824 / DSM 792 / JCM 1419 / IAM 19013 / LMG 5710 / NBRC 13948 / NRRL B-527 / VKM B-1787 / 2291 / W)).